A 344-amino-acid chain; its full sequence is MALTIDRDEIIGTLKREIQEITDMQEFQNLKSKYLGKKGLIKSLMNSLKDIDDVELKKEYGKSVNELKEELETLFDEKLSELKEKEREEKEKKNWVDITIPGARRKIGKENLITKTRKEIEEIFIGMGFSVAEGPEIENSWYNFDALNTPEWHPAREMQDTFYLSLDKEKLLRTHTSPVQVRTMLKSKPPLAIISPGRVYRKDELDATHSPVFHQVEGLYVDRNVSVSHLKMYLEVFAQKFFGNKVSVLLRPSYFPFTEPSFEVDISCIFCGGKGCNVCKNTGWIEILGAGLVHPNVFQSVNYDPKVWQGFAFGMGIERVAMLKYNIPDMRELYKNDIRFIENS.

Glutamate 259 is a Mg(2+) binding site.

This sequence belongs to the class-II aminoacyl-tRNA synthetase family. Phe-tRNA synthetase alpha subunit type 1 subfamily. In terms of assembly, tetramer of two alpha and two beta subunits. The cofactor is Mg(2+).

Its subcellular location is the cytoplasm. The enzyme catalyses tRNA(Phe) + L-phenylalanine + ATP = L-phenylalanyl-tRNA(Phe) + AMP + diphosphate + H(+). The chain is Phenylalanine--tRNA ligase alpha subunit from Petrotoga mobilis (strain DSM 10674 / SJ95).